A 184-amino-acid polypeptide reads, in one-letter code: Peptide deformylase (184 aa).

Fe cation-binding residues include Cys111 and His154. Glu155 is an active-site residue. His158 provides a ligand contact to Fe cation.

This sequence belongs to the polypeptide deformylase family. It depends on Fe(2+) as a cofactor.

The catalysed reaction is N-terminal N-formyl-L-methionyl-[peptide] + H2O = N-terminal L-methionyl-[peptide] + formate. Functionally, removes the formyl group from the N-terminal Met of newly synthesized proteins. Requires at least a dipeptide for an efficient rate of reaction. N-terminal L-methionine is a prerequisite for activity but the enzyme has broad specificity at other positions. The sequence is that of Peptide deformylase from Macrococcus caseolyticus (strain JCSC5402) (Macrococcoides caseolyticum).